A 728-amino-acid polypeptide reads, in one-letter code: NF-kappa-B inhibitor zeta (728 aa).

A disordered region spans residues glycine 45–arginine 107. A compositionally biased stretch (low complexity) spans serine 53 to glutamate 82. Over residues serine 83–valine 96 the composition is skewed to basic and acidic residues. Positions arginine 107 to asparagine 129 constitute an OCA domain. A Nuclear localization signal motif is present at residues lysine 163–arginine 178. 2 stretches are compositionally biased toward polar residues: residues proline 241–aspartate 250 and glutamine 268–serine 288. The segment at proline 241 to leucine 334 is disordered. Residues glutamine 303 to proline 315 are compositionally biased toward low complexity. Positions leucine 316–tyrosine 330 are enriched in polar residues. A required for transcriptional activity region spans residues lysine 329 to serine 403. Residues methionine 414 to tyrosine 728 form an interaction with NFKB1/p50 region. ANK repeat units follow at residues aspartate 453–methionine 482, asparagine 489–threonine 518, tryptophan 522–glutamine 551, aspartate 561–proline 589, valine 591–alanine 617, serine 622–phenylalanine 651, and asparagine 658–threonine 691.

Interacts with NFKB1/p50. Interacts with RELA. Interacts with AKIRIN2. Expressed in kidney, liver, lung and heart. Expressed at very low levels in skeletal muscle, spleen and brain.

Its subcellular location is the nucleus. Involved in regulation of NF-kappa-B transcription factor complexes. Inhibits NF-kappa-B activity without affecting its nuclear translocation upon stimulation. Inhibits DNA-binding of RELA and NFKB1/p50, and of the NF-kappa-B p65-p50 heterodimer and the NF-kappa-B p50-p50 homodimer. Also seems to activate NF-kappa-B-mediated transcription. In vitro, upon association with NFKB1/p50 has transcriptional activation activity and, together with NFKB1/p50 and RELA, is recruited to LCN2 promoters. Promotes transcription of LCN2 and DEFB4. Is recruited to IL-6 promoters and activates IL-6 but decreases TNF-alpha production in response to LPS. Seems to be involved in the induction of inflammatory genes activated through TLR/IL-1 receptor signaling. Involved in the induction of T helper 17 cells (Th17) differentiation upon recognition of antigen by T cell antigen receptor (TCR). In Mus musculus (Mouse), this protein is NF-kappa-B inhibitor zeta (Nfkbiz).